Here is a 168-residue protein sequence, read N- to C-terminus: Gremlin-2 (168 aa).

Positions 1-21 (MFWKLSLSLFLVAVLVKVAEA) are cleaved as a signal peptide. Asn40 carries an N-linked (GlcNAc...) asparagine glycan. Intrachain disulfides connect Cys73-Cys123, Cys87-Cys137, Cys97-Cys155, and Cys101-Cys157. Residues 73–163 (CKTQPLRQTV…QCRCMSVNLS (91 aa)) enclose the CTCK domain. An N-linked (GlcNAc...) asparagine glycan is attached at Asn161.

This sequence belongs to the DAN family. As to quaternary structure, homodimer. Interacts with BMP2, BMP4 and BMP7, but has lower affinity for BMP7 than for BMP2 and BMP4. Binds heparin; this impairs the interaction with BMP2. Post-translationally, N-glycosylated.

It is found in the secreted. Cytokine that inhibits the activity of BMP2 and BMP4 in a dose-dependent manner, and thereby modulates signaling by BMP family members. Contributes to the regulation of embryonic morphogenesis via BMP family members. Antagonizes BMP4-induced suppression of progesterone production in granulosa cells. The chain is Gremlin-2 (GREM2) from Homo sapiens (Human).